The sequence spans 256 residues: Large ribosomal subunit protein bL21c (256 aa).

Residues M1–A55 constitute a chloroplast transit peptide.

Component of the chloroplast large ribosomal subunit (LSU). Mature 70S chloroplast ribosomes of higher plants consist of a small (30S) and a large (50S) subunit. The 30S small subunit contains 1 molecule of ribosomal RNA (16S rRNA) and 24 different proteins. The 50S large subunit contains 3 rRNA molecules (23S, 5S and 4.5S rRNA) and 33 different proteins.

It localises to the plastid. The protein resides in the chloroplast. Functionally, component of the chloroplast ribosome (chloro-ribosome), a dedicated translation machinery responsible for the synthesis of chloroplast genome-encoded proteins, including proteins of the transcription and translation machinery and components of the photosynthetic apparatus. In Spinacia oleracea (Spinach), this protein is Large ribosomal subunit protein bL21c (RPL21).